The chain runs to 247 residues: MNEKIAILSAYSFVNIEEPANLIPKLLLIGKRKYVRGTILLANEGFNGSFSGSYENVNLVLEELIKLTGPKDVNVKINYSDVHPFQKLKVRLKKEIVAMNVDGLNVDLFKGEYIEPKDWDEFITKQDVIVIDTRNDYEVEVGTFKSAVNPNTKTFKQFPAWVQQNQELLKGKKIAMVCTGGIRCEKSTSLLKSIGYDEVYHLKGGILQYLEDTQNKNNLWQGECFVFDDRRAVTDDLSPVERHWLQR.

One can recognise a Rhodanese domain in the interval 124–218 (TKQDVIVIDT…YLEDTQNKNN (95 aa)). C178 functions as the Cysteine persulfide intermediate in the catalytic mechanism.

The protein belongs to the TrhO family.

The catalysed reaction is uridine(34) in tRNA + AH2 + O2 = 5-hydroxyuridine(34) in tRNA + A + H2O. Its function is as follows. Catalyzes oxygen-dependent 5-hydroxyuridine (ho5U) modification at position 34 in tRNAs. The polypeptide is tRNA uridine(34) hydroxylase (Rickettsia africae (strain ESF-5)).